Here is a 2281-residue protein sequence, read N- to C-terminus: MGFARQIKLLLWKNWTLRKRQKIRFVVELVWPLSLFLVLIWLRNVNPLYSKHECHFPNKAMPSAGMLPWLQGIFCNVNNPCFQSPTAGESPGIVSNYNNSILARVYRDFQELLMDAPESQHLGQVWRELRTLSQLMNTLRMHPERIAGRGIRIREVLKDDEMLTLFLVKNIGLSDSVVYLLVNSQVRPEQFARGVPDLMLKDIACSEALLERFLIFPQRRAAQTVRGSLCSLSQGTLQWMEDTLYANVDFFKLFHVFPRLLDSRSQGMNLRSWGRILSDMSPRIQEFIHRPSVQDLLWVTRPLVQTGGPETFTQLMGILSDLLCGYPEGGGSRVFSFNWYEDNNYKAFLGIDSTRKDPIYSYDERTTTFCNALIQSLESNPLTKIAWRAAKPLLMGKILFTPDSPATRRILKNANSTFEELERVRKLVKVWEEVGPQIWYFFDKSTQMSMIRDTLENPTVKAFWNRQLGEEGITAEAVLNFLYNGPREGQADDVDNFNWRDIFNITDRALRLANQYLECLILDKFESYDDEFQLTQRALSLLEENRFWAGVVFPDMHPWTSSLPPHVKYKIRMDIDVVEKTNKIKDRYWDSGPRADPVEDFRYIWGGFAYLQDMVEHGITRSQAQEEVPVGIYLQQMPYPCFVDDSFMIILNRCFPIFMVLAWIYSVSMTVKSIVLEKELRLKETLKNQGVSNRVIWCTWFLDSFSIMSMSICLLTIFIMHGRILHYSNPFILFLFLLAFSIATIMQCFLLSTFFSRASLAAACSGVIYFTLYLPHILCFAWQDRITADMKMAVSLLSPVAFGFGTEYLARFEEQGVGLQWSNIGNSPMEGDEFSFLMSMKMMLLDAALYGLLAWYLDQVFPGDYGTPLPWYFLLQESYWLGGEGCSTREERALEKTEPITEEMEDPEYPEGINDCFFERELPGLVPGVCVKNLVKIFEPYGRPAVDRLNITFYESQITAFLGHNGAGKTTTLSIMTGLLPPTSGTVLVGGKDIETNLDAIRQSLGMCPQHNILFHHLTVAEHILFYAQLKGRSWDKAQLEMEAMLEDTGLHHKRNEEAQDLSGGVQRKLSVAIAFVGDAKVVVLDEPTSGVDPYSRRSIWDLLLKYRSGRTIIMSTHHMDEADILGDRIAIISQGRLYCSGTPLFLKNCFGTGFYLTLVRRMKTIQSQGRGREATCSCASKGFSVRCPACAEAITPEQVLDGDVNELTDMVHHHVPEAKLVECIGQELIFLLPNKNFKQRAYASLFRELEETLADLGLSSFGISDTPLEEIFLKVTEDLDSGHLFAGGTQQKRENINLRHPCSGPSEKAGQTPQGSSSHPREPAAHPEGQPPPEREGHSRLNSGARLIVQHVQALLVKRFQHTIRSHKDFLAQIVLPATFVFLALMLSLIIPPFGEYPALTLHPWMYGQQYTFFSMDQLDSEWLSALADVLVNKPGFGNRCLKEEWLPEFPCGNSSPWKTPSVSPDVTHLLQQQKWTADQPSPSCRCSTREKLTMLPECPEGAGGLPPPQRIQRSTEILQDLTDRNVSDFLVKTYPALIRSSLKSKFWVNEQRYGGISVGGKLPAPPFTGEALVGFLSDLGQLMNVSGGPMTREAAKEMPAFLKQLETEDNIKVWFNNKGWHALVSFLNVAHNAILRASLHKDKNPEEYGITVISQPLNLTKEQLSEITVLTTSVDAVVAICVIFAMSFVPASFVLYLIQERVNKAKHLQFVSGVSPTTYWLTNFLWDIMNYTVSAALVVGIFIGFQKKAYTSSENLPALVALLMLYGWAVIPMMYPASFLFDIPSTAYVALSCANLFIGINSSAITFVLELFENNRTLLRINAMLRKLLIIFPHFCLGRGLIDLALSQAVTDVYARFGEEHSSNPFQWDLIGKNLAAMAVEGVVYFLLTLLIQYQFFFSRWTTEPAKEPITDEDDDVAEERQRIISGGNKTDILRLNELTKVYSGTSSPAVDRLCVGVRPGECFGLLGVNGAGKTTTFKMLTGDTAVTSGDATVAGKSILTNISDVHQSMGYCPQFDAIDDLLTGREHLYLYARLRGVPAEEIERVTNWSIQSLGLSLYADRLAGTYSGGNKRKLSTAIALIGCPPLVLLDEPTTGMDPQARRMLWNTIMGIIREGRAVVLTSHSMEECEALCTRLAIMVKGAFQCLGTIQHLKSKFGDGYIVTMKIRSPKDDLLPDLGPVEQFFQGNFPGSVQRERHYNMLQFQVSSSSLARIFRLLVSHKDSLLIEEYSVTQTTLDQVFVNFAKQQNETYDLPLHPRAAGASRQAKEVDKGNSAPQG.

The Cytoplasmic segment spans residues 1-24 (MGFARQIKLLLWKNWTLRKRQKIR). Residues 25–45 (FVVELVWPLSLFLVLIWLRNV) traverse the membrane as a helical segment. At 46–646 (NPLYSKHECH…MPYPCFVDDS (601 aa)) the chain is on the extracellular side. 2 cysteine pairs are disulfide-bonded: C54–C81 and C75–C324. The N-linked (GlcNAc...) asparagine glycan is linked to N98. Mg(2+) is bound by residues S336 and N338. The cysteines at positions 370 and 519 are disulfide-linked. N415 and N504 each carry an N-linked (Hex...) asparagine glycan. The an N-all-trans-retinylidenephosphatidylethanolamine site is built by R587 and R653. 3 disulfide bridges follow: C641/C1488, C1442/C1453, and C1486/C1500. A helical membrane pass occupies residues 647–667 (FMIILNRCFPIFMVLAWIYSV). At 668 to 699 (SMTVKSIVLEKELRLKETLKNQGVSNRVIWCT) the chain is on the cytoplasmic side. The chain crosses the membrane as a helical span at residues 700–720 (WFLDSFSIMSMSICLLTIFIM). Over 721–730 (HGRILHYSNP) the chain is Extracellular. Residues 731 to 751 (FILFLFLLAFSIATIMQCFLL) form a helical membrane-spanning segment. At 752–759 (STFFSRAS) the chain is on the cytoplasmic side. A helical membrane pass occupies residues 760–780 (LAAACSGVIYFTLYLPHILCF). Topologically, residues 781 to 835 (AWQDRITADMKMAVSLLSPVAFGFGTEYLARFEEQGVGLQWSNIGNSPMEGDEFS) are extracellular. A helical membrane pass occupies residues 836 to 856 (FLMSMKMMLLDAALYGLLAWY). At 857–1374 (LDQVFPGDYG…IRSHKDFLAQ (518 aa)) the chain is on the cytoplasmic side. T901 carries the post-translational modification Phosphothreonine. One can recognise an ABC transporter 1 domain in the interval 929 to 1160 (VCVKNLVKIF…FGTGFYLTLV (232 aa)). ATP-binding residues include F938, G966, and K969. T970 contacts Mg(2+). Positions 971, 1010, 1054, 1064, 1065, and 1118 each coordinate ATP. S1185 is subject to Phosphoserine. Positions 1295-1340 (ENINLRHPCSGPSEKAGQTPQGSSSHPREPAAHPEGQPPPEREGHS) are disordered. Over residues 1310 to 1319 (AGQTPQGSSS) the composition is skewed to polar residues. Residue T1313 is modified to Phosphothreonine. Phosphoserine occurs at positions 1317 and 1319. A helical transmembrane segment spans residues 1375-1395 (IVLPATFVFLALMLSLIIPPF). Over 1396 to 1679 (GEYPALTLHP…TVLTTSVDAV (284 aa)) the chain is Extracellular. N-linked (Hex...) asparagine glycosylation is present at N1455. The N-linked (Hex...) asparagine glycan is linked to N1527. Residue N1586 is glycosylated (N-linked (GlcNAc...) asparagine). Residue N1660 is glycosylated (N-linked (Hex...) asparagine). A helical transmembrane segment spans residues 1680-1700 (VAICVIFAMSFVPASFVLYLI). Residues 1701–1725 (QERVNKAKHLQFVSGVSPTTYWLTN) lie on the Cytoplasmic side of the membrane. A helical transmembrane segment spans residues 1726–1746 (FLWDIMNYTVSAALVVGIFIG). Residues 1747–1757 (FQKKAYTSSEN) lie on the Extracellular side of the membrane. The helical transmembrane segment at 1758–1778 (LPALVALLMLYGWAVIPMMYP) threads the bilayer. The Cytoplasmic portion of the chain corresponds to 1779–1790 (ASFLFDIPSTAY). A helical transmembrane segment spans residues 1791–1811 (VALSCANLFIGINSSAITFVL). Topologically, residues 1812 to 1829 (ELFENNRTLLRINAMLRK) are extracellular. Residue N1817 is glycosylated (N-linked (GlcNAc...) asparagine). The chain crosses the membrane as a helical span at residues 1830–1850 (LLIIFPHFCLGRGLIDLALSQ). Residues 1851 to 1879 (AVTDVYARFGEEHSSNPFQWDLIGKNLAA) lie on the Cytoplasmic side of the membrane. Residues 1880–1900 (MAVEGVVYFLLTLLIQYQFFF) form a helical membrane-spanning segment. Topologically, residues 1901 to 2281 (SRWTTEPAKE…VDKGNSAPQG (381 aa)) are extracellular. The N-linked (GlcNAc...) asparagine glycan is linked to N1931. In terms of domain architecture, ABC transporter 2 spans 1936–2168 (LRLNELTKVY…FGDGYIVTMK (233 aa)). The ATP site is built by N1972, G1973, K1976, T1977, and T1978. Mg(2+) is bound at residue T1977. N2004 and N2050 each carry an N-linked (GlcNAc...) asparagine glycan. Residue G2071 coordinates ATP. Positions 2242 to 2247 (VFVNFA) are essential for ATP binding and ATPase activity. Residue N2251 is glycosylated (N-linked (GlcNAc...) asparagine). Positions 2262 to 2281 (AAGASRQAKEVDKGNSAPQG) are disordered.

Post-translationally, N-glycosylated. In terms of processing, proteolytic cleavage by trypsin leads to a 120-kDa N-terminal fragment and a 115-kDa C-terminal fragment that are linked through disulfide bonds. Phosphorylation is independent of light exposure and modulates ATPase activity. As to expression, expressed in retina namely in the periphery and incisures of the rod outer segments (ROS).

It localises to the membrane. It is found in the cell projection. The protein resides in the cilium. The protein localises to the photoreceptor outer segment. Its subcellular location is the cytoplasmic vesicle. It localises to the endoplasmic reticulum. The enzyme catalyses ATP + H2O + phospholipidSide 1 = ADP + phosphate + phospholipidSide 2.. The catalysed reaction is an N-all-trans-retinylidenephosphatidylethanolamine(out) + ATP + H2O = an N-all-trans-retinylidenephosphatidylethanolamine(in) + ADP + phosphate + H(+). It carries out the reaction a 1,2-diacyl-sn-glycero-3-phosphoethanolamine(out) + ATP + H2O = a 1,2-diacyl-sn-glycero-3-phosphoethanolamine(in) + ADP + phosphate + H(+). It catalyses the reaction N-11-cis-retinylidenephosphatidylethanolamine(out) + ATP + H2O = N-11-cis-retinylidenephosphatidylethanolamine(in) + ADP + phosphate + H(+). The enzyme catalyses ATP + H2O = ADP + phosphate + H(+). Its activity is regulated as follows. All-trans-retinal transport activity is reduced by EDTA chelation of Mg2+. All-trans-retinal transport activity is inhibited by N-ethylmaleimide (NEM). Phosphatidylethanolamine transport is strongly inhibited by beryllium fluoride and NEM. In terms of biological role, flippase that catalyzes in an ATP-dependent manner the transport of retinal-phosphatidylethanolamine conjugates like the 11-cis and all-trans isomers of N-retinylidene-phosphatidylethanolamine from the lumen to the cytoplasmic leaflet of photoreceptor outer segment disk membranes, where N-cis-retinylidene-phosphatidylethanolamine (N-cis-R-PE) is then isomerized to its all-trans isomer (N-trans-R-PE) and reduced by RDH8 to produce all-trans-retinol (all-trans-rol) and therefore prevents the accumulation of excess of 11-cis-retinal and its schiff-base conjugate and the formation of toxic bisretinoid. Displays both ATPase and GTPase activity that is strongly influenced by the lipid environment and the presence of retinoid compounds. Binds the unprotonated form of N-retinylidene-phosphatidylethanolamine with high affinity in the absence of ATP and ATP binding and hydrolysis induce a protein conformational change that causes the dissociation of N-retinylidene-phosphatidylethanolamine. This Bos taurus (Bovine) protein is Retinal-specific phospholipid-transporting ATPase ABCA4.